The sequence spans 255 residues: Proteasome subunit alpha (255 aa).

The tract at residues 224-255 (RLEELLGERGPAQHAPEEPADPEPEPPIAPPG) is disordered.

This sequence belongs to the peptidase T1A family. In terms of assembly, the 20S proteasome core is composed of 14 alpha and 14 beta subunits that assemble into four stacked heptameric rings, resulting in a barrel-shaped structure. The two inner rings, each composed of seven catalytic beta subunits, are sandwiched by two outer rings, each composed of seven alpha subunits. The catalytic chamber with the active sites is on the inside of the barrel. Has a gated structure, the ends of the cylinder being occluded by the N-termini of the alpha-subunits. Is capped by the proteasome-associated ATPase, ARC.

Its subcellular location is the cytoplasm. Its pathway is protein degradation; proteasomal Pup-dependent pathway. Its activity is regulated as follows. The formation of the proteasomal ATPase ARC-20S proteasome complex, likely via the docking of the C-termini of ARC into the intersubunit pockets in the alpha-rings, may trigger opening of the gate for substrate entry. Interconversion between the open-gate and close-gate conformations leads to a dynamic regulation of the 20S proteasome proteolysis activity. Component of the proteasome core, a large protease complex with broad specificity involved in protein degradation. The polypeptide is Proteasome subunit alpha (Nocardioides sp. (strain ATCC BAA-499 / JS614)).